Consider the following 571-residue polypeptide: DDB1- and CUL4-associated factor 11 homolog (571 aa).

The interval 51–75 is disordered; the sequence is RMKPNHSNDSDTDFSSDDEGCPKMT. Residues 60–69 show a composition bias toward acidic residues; that stretch reads SDTDFSSDDE. 6 WD repeats span residues 162 to 201, 266 to 305, 309 to 349, 357 to 396, 435 to 479, and 482 to 521; these read RVATKSFCTQYIQNGTKIVVASQDEKIRFYQRNPDKSKYR, RDHCAVFCVKFSDSSEQIVCGTSQYSIHVFDVEQRRRIRT, AHED…DGDV, GHRDGVTHVDSRQDERYLLSNSKDQTIKVWDLRKFSNMSG, GHSV…VSRR, and GHTAVVRECDWHPTENEIVSSAWDGVTTVWTWDERQEGVI.

Belongs to the WD repeat LEC14B family.

Involved in regulation of lifespan. Required for dopaminergic CEP neuron degeneration in response to Mn(2+). Inhibits the skn-1-mediated up-regulation of tatn-1. This is DDB1- and CUL4-associated factor 11 homolog from Caenorhabditis elegans.